An 885-amino-acid polypeptide reads, in one-letter code: Conidiophore development regulator abaA (885 aa).

Residues 1–20 (MSSLFQPRPVLSSQRYSQSP) are compositionally biased toward polar residues. The interval 1–25 (MSSLFQPRPVLSSQRYSQSPDYVDT) is disordered. Residues 124-217 (QKDKGGVWRR…QVVKKFFEDL (94 aa)) constitute a DNA-binding region (TEA). Disordered regions lie at residues 502-539 (KEKR…WTRR) and 817-885 (APGS…TAGW). Basic and acidic residues-rich tracts occupy residues 508 to 521 (YADG…ERAG) and 831 to 840 (VESHAGDHHG).

Belongs to the TEC1 family.

The protein localises to the nucleus. Functionally, brlA, abaA and wetA are pivotal regulators of conidiophore development and conidium maturation. They act individually and together to regulate their own expression and that of numerous other sporulation-specific genes. BrlA, abaA and wetA act together to positively regulate the expression of the Pks1 gene cluster that mediates the biosynthesis of an anthraquinone derivative pigment that contributes to conidial pigmentation that provides protection from UV radiation, heat and cold stress. This Metarhizium robertsii (strain ARSEF 23 / ATCC MYA-3075) (Metarhizium anisopliae (strain ARSEF 23)) protein is Conidiophore development regulator abaA.